We begin with the raw amino-acid sequence, 76 residues long: Exodeoxyribonuclease 7 small subunit (76 aa).

Belongs to the XseB family. Heterooligomer composed of large and small subunits.

Its subcellular location is the cytoplasm. The enzyme catalyses Exonucleolytic cleavage in either 5'- to 3'- or 3'- to 5'-direction to yield nucleoside 5'-phosphates.. Functionally, bidirectionally degrades single-stranded DNA into large acid-insoluble oligonucleotides, which are then degraded further into small acid-soluble oligonucleotides. The chain is Exodeoxyribonuclease 7 small subunit from Geobacter sulfurreducens (strain ATCC 51573 / DSM 12127 / PCA).